The primary structure comprises 310 residues: Putative HTH-type transcriptional regulatory protein M1425_1284 (310 aa).

In terms of domain architecture, HTH cro/C1-type spans 125–180 (LKHKREEMGYSIGDVAKFLGVSRKAIYDYEKGDSDVSLEVAEKLIDLFGDDIIGDV). A DNA-binding region (H-T-H motif) is located at residues 136–155 (IGDVAKFLGVSRKAIYDYEK).

This chain is Putative HTH-type transcriptional regulatory protein M1425_1284, found in Saccharolobus islandicus (strain M.14.25 / Kamchatka #1) (Sulfolobus islandicus).